Reading from the N-terminus, the 155-residue chain is Small ribosomal subunit protein uS7cz/uS7cy (155 aa).

The protein belongs to the universal ribosomal protein uS7 family. As to quaternary structure, part of the 30S ribosomal subunit.

The protein resides in the plastid. The protein localises to the chloroplast. One of the primary rRNA binding proteins, it binds directly to 16S rRNA where it nucleates assembly of the head domain of the 30S subunit. This is Small ribosomal subunit protein uS7cz/uS7cy (rps7-A) from Lotus japonicus (Lotus corniculatus var. japonicus).